The chain runs to 165 residues: 3-isopropylmalate dehydratase small subunit (165 aa).

This sequence belongs to the LeuD family. LeuD type 2 subfamily. Heterodimer of LeuC and LeuD.

It catalyses the reaction (2R,3S)-3-isopropylmalate = (2S)-2-isopropylmalate. Its pathway is amino-acid biosynthesis; L-leucine biosynthesis; L-leucine from 3-methyl-2-oxobutanoate: step 2/4. Catalyzes the isomerization between 2-isopropylmalate and 3-isopropylmalate, via the formation of 2-isopropylmaleate. This is 3-isopropylmalate dehydratase small subunit from Helicobacter hepaticus (strain ATCC 51449 / 3B1).